Here is a 269-residue protein sequence, read N- to C-terminus: 2-dehydro-3-deoxyphosphooctonate aldolase (269 aa).

This sequence belongs to the KdsA family.

The protein resides in the cytoplasm. The enzyme catalyses D-arabinose 5-phosphate + phosphoenolpyruvate + H2O = 3-deoxy-alpha-D-manno-2-octulosonate-8-phosphate + phosphate. Its pathway is carbohydrate biosynthesis; 3-deoxy-D-manno-octulosonate biosynthesis; 3-deoxy-D-manno-octulosonate from D-ribulose 5-phosphate: step 2/3. It functions in the pathway bacterial outer membrane biogenesis; lipopolysaccharide biosynthesis. The chain is 2-dehydro-3-deoxyphosphooctonate aldolase from Chlamydia trachomatis serovar L2 (strain ATCC VR-902B / DSM 19102 / 434/Bu).